Consider the following 342-residue polypeptide: Farnesyl pyrophosphate synthase 1 (342 aa).

K48, R51, and Q86 together coordinate isopentenyl diphosphate. Mg(2+) is bound by residues D93 and D97. Residue R102 coordinates dimethylallyl diphosphate. R103 provides a ligand contact to isopentenyl diphosphate. K190, T191, Q229, K246, and K255 together coordinate dimethylallyl diphosphate.

It belongs to the FPP/GGPP synthase family. It depends on Mg(2+) as a cofactor.

It localises to the cytoplasm. The enzyme catalyses isopentenyl diphosphate + dimethylallyl diphosphate = (2E)-geranyl diphosphate + diphosphate. It carries out the reaction isopentenyl diphosphate + (2E)-geranyl diphosphate = (2E,6E)-farnesyl diphosphate + diphosphate. It functions in the pathway isoprenoid biosynthesis; farnesyl diphosphate biosynthesis; farnesyl diphosphate from geranyl diphosphate and isopentenyl diphosphate: step 1/1. The protein operates within isoprenoid biosynthesis; geranyl diphosphate biosynthesis; geranyl diphosphate from dimethylallyl diphosphate and isopentenyl diphosphate: step 1/1. In terms of biological role, catalyzes the sequential condensation of isopentenyl pyrophosphate with the allylic pyrophosphates, dimethylallyl pyrophosphate, and then with the resultant geranylpyrophosphate to the ultimate product farnesyl pyrophosphate. The protein is Farnesyl pyrophosphate synthase 1 (FPS1) of Parthenium argentatum (Guayule rubber plant).